The sequence spans 172 residues: Shikimate kinase (172 aa).

14–19 (GAGKST) serves as a coordination point for ATP. Ser18 contacts Mg(2+). Substrate-binding residues include Asp36, Arg60, and Gly82. ATP is bound at residue Arg120. Residue Arg139 coordinates substrate. Gln156 provides a ligand contact to ATP.

This sequence belongs to the shikimate kinase family. In terms of assembly, monomer. It depends on Mg(2+) as a cofactor.

The protein resides in the cytoplasm. The enzyme catalyses shikimate + ATP = 3-phosphoshikimate + ADP + H(+). It functions in the pathway metabolic intermediate biosynthesis; chorismate biosynthesis; chorismate from D-erythrose 4-phosphate and phosphoenolpyruvate: step 5/7. Catalyzes the specific phosphorylation of the 3-hydroxyl group of shikimic acid using ATP as a cosubstrate. The chain is Shikimate kinase from Vibrio parahaemolyticus serotype O3:K6 (strain RIMD 2210633).